Consider the following 235-residue polypeptide: Phosphoribosylaminoimidazole-succinocarboxamide synthase (235 aa).

Belongs to the SAICAR synthetase family.

The enzyme catalyses 5-amino-1-(5-phospho-D-ribosyl)imidazole-4-carboxylate + L-aspartate + ATP = (2S)-2-[5-amino-1-(5-phospho-beta-D-ribosyl)imidazole-4-carboxamido]succinate + ADP + phosphate + 2 H(+). It functions in the pathway purine metabolism; IMP biosynthesis via de novo pathway; 5-amino-1-(5-phospho-D-ribosyl)imidazole-4-carboxamide from 5-amino-1-(5-phospho-D-ribosyl)imidazole-4-carboxylate: step 1/2. This chain is Phosphoribosylaminoimidazole-succinocarboxamide synthase, found in Clostridium kluyveri (strain NBRC 12016).